Consider the following 278-residue polypeptide: 4-diphosphocytidyl-2-C-methyl-D-erythritol kinase (278 aa).

Lys10 is an active-site residue. 93-103 is an ATP binding site; sequence PMGGGLGGGSS. The active site involves Asp135.

It belongs to the GHMP kinase family. IspE subfamily.

It carries out the reaction 4-CDP-2-C-methyl-D-erythritol + ATP = 4-CDP-2-C-methyl-D-erythritol 2-phosphate + ADP + H(+). The protein operates within isoprenoid biosynthesis; isopentenyl diphosphate biosynthesis via DXP pathway; isopentenyl diphosphate from 1-deoxy-D-xylulose 5-phosphate: step 3/6. Its function is as follows. Catalyzes the phosphorylation of the position 2 hydroxy group of 4-diphosphocytidyl-2C-methyl-D-erythritol. This chain is 4-diphosphocytidyl-2-C-methyl-D-erythritol kinase, found in Thiobacillus denitrificans (strain ATCC 25259 / T1).